We begin with the raw amino-acid sequence, 560 residues long: Protein GAT2 (560 aa).

Disordered regions lie at residues 274–297 (RQQEQQQLKQQESEKESSSPFSNK), 345–383 (FLSTSSSSPSPTAGSAPLQKLQVPRQDDPNDKKMNISSS), and 412–461 (LNTK…SDEK). Residues 347–361 (STSSSSPSPTAGSAP) are compositionally biased toward low complexity. Basic and acidic residues predominate over residues 369-378 (RQDDPNDKKM). Over residues 414-425 (TKKKNNRGRPRA) the composition is skewed to basic residues. Polar residues predominate over residues 428–456 (RQPTLTTSSHFINNSNPGAAAVSTTTPAA). The GATA-type zinc finger occupies 472-497 (CFHCGETETPEWRKGPYGTRTLCNAC).

This is Protein GAT2 (GAT2) from Saccharomyces cerevisiae (strain ATCC 204508 / S288c) (Baker's yeast).